A 104-amino-acid polypeptide reads, in one-letter code: Large ribosomal subunit protein eL36 (104 aa).

This sequence belongs to the eukaryotic ribosomal protein eL36 family.

The protein is Large ribosomal subunit protein eL36 (RPL36) of Tetrahymena thermophila (strain SB210).